The sequence spans 413 residues: tRNA (guanine-N(7)-)-methyltransferase non-catalytic subunit WDR4 (413 aa).

The residue at position 2 (Ala2) is an N-acetylalanine. WD repeat units follow at residues 61-100, 102-141, 145-185, 188-228, and 289-329; these read TGSD…CLSV, MVVR…GCGR, GHLS…IESF, GHTE…QLQC, and TFPH…WQAA. The tract at residues 380 to 413 is disordered; sequence RLQQQLKKKRQRSPFPGSPEQTKKACPGQSALSC. Ser392 and Ser412 each carry phosphoserine.

Belongs to the WD repeat TRM82 family. In terms of assembly, non-catalytic component of the METTL1-WDR4 complex, composed of METTL1 and WDR4. Interacts with FEN1; the interaction is direct.

It localises to the nucleus. The protein resides in the chromosome. It participates in tRNA modification; N(7)-methylguanine-tRNA biosynthesis. In terms of biological role, non-catalytic component of the METTL1-WDR4 methyltransferase complex required for the formation of N(7)-methylguanine in a subset of RNA species, such as tRNAs, mRNAs and microRNAs (miRNAs). In the METTL1-WDR4 methyltransferase complex, WDR4 acts as a scaffold for tRNA-binding. Required for the formation of N(7)-methylguanine at position 46 (m7G46) in a large subset of tRNAs that contain the 5'-RAGGU-3' motif within the variable loop. M7G46 interacts with C13-G22 in the D-loop to stabilize tRNA tertiary structure and protect tRNAs from decay. Also required for the formation of N(7)-methylguanine at internal sites in a subset of mRNAs. Also required for methylation of a specific subset of miRNAs, such as let-7. Acts as a regulator of embryonic stem cell self-renewal and differentiation. Independently of METTL1, also plays a role in genome stability: localizes at the DNA replication site and regulates endonucleolytic activities of FEN1. The sequence is that of tRNA (guanine-N(7)-)-methyltransferase non-catalytic subunit WDR4 from Mus musculus (Mouse).